A 198-amino-acid chain; its full sequence is TATA-box-binding protein (198 aa).

Repeat copies occupy residues 14–90 (IENI…IKTL) and 105–181 (IQNI…FDKL).

It belongs to the TBP family.

Functionally, general factor that plays a role in the activation of archaeal genes transcribed by RNA polymerase. Binds specifically to the TATA box promoter element which lies close to the position of transcription initiation. This is TATA-box-binding protein from Saccharolobus shibatae (strain ATCC 51178 / DSM 5389 / JCM 8931 / NBRC 15437 / B12) (Sulfolobus shibatae).